A 74-amino-acid chain; its full sequence is Defensin (74 aa).

An N-terminal signal peptide occupies residues 1–22 (MRGLCICLVFLLVCGLVSATAA). The propeptide occupies 23-36 (APAESEVAHLRVRR). 3 cysteine pairs are disulfide-bonded: Cys-40/Cys-61, Cys-47/Cys-69, and Cys-51/Cys-71.

Hemolymph.

The protein resides in the secreted. Antibacterial activity against Gram-positive and Gram-negative bacteria. This chain is Defensin (VSNA1), found in Dermacentor variabilis (American dog tick).